The chain runs to 260 residues: Sperm microtubule inner protein 6 (260 aa).

The protein belongs to the SPMIP6 family. Microtubule inner protein component of sperm flagellar doublet microtubules. Interacts with alpha-tubulin. As to expression, testis-specific, expressed exclusively in germ cells (at protein level). Testis-specific. In terms of tissue distribution, expressed in both lung and testis.

It is found in the cytoplasm. The protein resides in the cytoskeleton. Its subcellular location is the nucleus. It localises to the mitochondrion. The protein localises to the flagellum axoneme. May participate in intramanchette transport and midpiece formation of the sperm tail. May play a potential role in somatic cell proliferation. The sequence is that of Sperm microtubule inner protein 6 (SPMIP6) from Mus musculus (Mouse).